We begin with the raw amino-acid sequence, 411 residues long: Na(+)-translocating NADH-quinone reductase subunit F (411 aa).

The helical transmembrane segment at 5–25 (VILALGIAAFTVIVLVLVAII) threads the bilayer. Positions 36–130 (GDITIDINDD…NMEVELPEEI (95 aa)) constitute a 2Fe-2S ferredoxin-type domain. C73, C79, C82, and C114 together coordinate [2Fe-2S] cluster. Residues 133 to 273 (VKKWECTVIS…SGPFGEFFAK (141 aa)) enclose the FAD-binding FR-type domain.

The protein belongs to the NqrF family. As to quaternary structure, composed of six subunits; NqrA, NqrB, NqrC, NqrD, NqrE and NqrF. [2Fe-2S] cluster is required as a cofactor. The cofactor is FAD.

Its subcellular location is the cell inner membrane. It catalyses the reaction a ubiquinone + n Na(+)(in) + NADH + H(+) = a ubiquinol + n Na(+)(out) + NAD(+). In terms of biological role, NQR complex catalyzes the reduction of ubiquinone-1 to ubiquinol by two successive reactions, coupled with the transport of Na(+) ions from the cytoplasm to the periplasm. The first step is catalyzed by NqrF, which accepts electrons from NADH and reduces ubiquinone-1 to ubisemiquinone by a one-electron transfer pathway. The polypeptide is Na(+)-translocating NADH-quinone reductase subunit F (Haemophilus influenzae (strain PittGG)).